Here is a 457-residue protein sequence, read N- to C-terminus: Ribosome biogenesis protein YTM1 (457 aa).

The ubiquitin-like (UBL) domain stretch occupies residues 8–89; the sequence is VKVKFFTREK…ETTLTVEYTR (82 aa). The tract at residues 99-457 is sufficient for interaction with ERB1 and association with 66S pre-ribosomes; sequence NFNNDDWVSA…INKGDNIFKN (359 aa). 7 WD repeats span residues 101–140, 142–180, 203–241, 282–322, 324–363, 370–410, and 421–457; these read NNDD…EKQY, GHTG…GSVS, GHKA…MTAI, SHTG…CIDT, TTSY…SAKI, GHKN…PMYT, and GVND…IFKN. A disordered region spans residues 172–191; it reads TKNDDGSVSNNTGDENDEEN.

Belongs to the WD repeat WDR12/YTM1 family. Component of the NOP7 complex, composed of ERB1, NOP7 and YTM1. The complex is held together by ERB1, which interacts with NOP7 via its N-terminal domain and with YTM1 via a high-affinity interaction between the seven-bladed beta-propeller domains of the 2 proteins. The NOP7 complex associates with the 66S pre-ribosome. Interacts (via UBL domain) with MDN1 (via VWFA/MIDAS domain).

Its subcellular location is the nucleus. The protein localises to the nucleolus. It is found in the nucleoplasm. Its function is as follows. Component of the NOP7 complex, which is required for maturation of the 25S and 5.8S ribosomal RNAs and formation of the 60S ribosome. This is Ribosome biogenesis protein YTM1 from Candida glabrata (strain ATCC 2001 / BCRC 20586 / JCM 3761 / NBRC 0622 / NRRL Y-65 / CBS 138) (Yeast).